The sequence spans 99 residues: Putative protein adenylyltransferase MJ0141 (99 aa).

Residues 29-43 (GSYARGDYDEESDVD) carry the GSX(10)DXD motif motif. Mg(2+) contacts are provided by Asp41 and Asp43.

It belongs to the MntA antitoxin family. The cofactor is Mg(2+).

It catalyses the reaction L-tyrosyl-[protein] + ATP = O-(5'-adenylyl)-L-tyrosyl-[protein] + diphosphate. It carries out the reaction O-(5'-adenylyl)-L-tyrosyl-[protein] + ATP = O-[5'-(adenylyl-(5'-&gt;3')-adenylyl)]-L-tyrosyl-[protein] + diphosphate. Its function is as follows. Putative antitoxin component of a putative type VII toxin-antitoxin (TA) system. Its cognate toxin might be MF0142, which it might AMPylate. This chain is Putative protein adenylyltransferase MJ0141, found in Methanocaldococcus jannaschii (strain ATCC 43067 / DSM 2661 / JAL-1 / JCM 10045 / NBRC 100440) (Methanococcus jannaschii).